Consider the following 613-residue polypeptide: Protein ECM3 (613 aa).

Helical transmembrane passes span 10–30 (IWAS…GFGL), 74–94 (GIIC…AFIV), 106–126 (GGIL…AYLQ), and 143–163 (VANV…LGGF). The tract at residues 177 to 256 (DEENTLTNDD…PAIDDRSSNS (80 aa)) is disordered. Polar residues-rich tracts occupy residues 187 to 206 (SAQQ…SNQD) and 213 to 226 (ESTV…SYIS). 2 positions are modified to phosphoserine: Ser291 and Ser338. Residues 345–366 (RRRKSSISSQGAPSVLQADGTI) form a disordered region. Helical transmembrane passes span 432-452 (MAVI…LFVT), 471-491 (FIMD…LILL), 546-566 (MLLF…LIYF), and 587-607 (FLML…SYFI).

The protein resides in the endoplasmic reticulum membrane. May be involved in cell wall organization and biogenesis. The protein is Protein ECM3 (ECM3) of Saccharomyces cerevisiae (strain ATCC 204508 / S288c) (Baker's yeast).